A 382-amino-acid polypeptide reads, in one-letter code: Mannitol-1-phosphate 5-dehydrogenase (382 aa).

4 to 15 provides a ligand contact to NAD(+); the sequence is AVHFGAGNIGRG.

Belongs to the mannitol dehydrogenase family.

It catalyses the reaction D-mannitol 1-phosphate + NAD(+) = beta-D-fructose 6-phosphate + NADH + H(+). The polypeptide is Mannitol-1-phosphate 5-dehydrogenase (Vibrio campbellii (strain ATCC BAA-1116)).